The following is a 233-amino-acid chain: Modulator of macroautophagy TMEM150B (233 aa).

Over 1–7 (MWGYLSL) the chain is Cytoplasmic. Residues 8–28 (MPVFLAVWAISGVWIVFAIAV) traverse the membrane as a helical segment. Topologically, residues 29-51 (TNRTVDLSKGFPYISICGSFPPQ) are extracellular. N-linked (GlcNAc...) asparagine glycosylation is present at asparagine 30. A helical transmembrane segment spans residues 52–72 (SCIFSQVLNMGAALAAWICIV). Over 73–84 (RYHQLRDWGVRR) the chain is Cytoplasmic. The chain crosses the membrane as a helical span at residues 85–105 (WPNQLILWTGLLCALGTSVVG). The Extracellular segment spans residues 106 to 116 (NFQEKNQRPTH). A helical membrane pass occupies residues 117 to 137 (LAGAFLAFILGNVYFWLQLLL). The Cytoplasmic portion of the chain corresponds to 138 to 155 (WRLKRLPQPGAAWIGPLR). Residues 156–176 (LGLCSVCTILIVAMIVLHACS) traverse the membrane as a helical segment. Residues 177–185 (LRSVSAACE) lie on the Extracellular side of the membrane. A helical membrane pass occupies residues 186-206 (WVVAMLLFALFGLLAVDFSAL). Residues 207-233 (ESCTLCVQPWPSLSPPPASPISLPVQL) lie on the Cytoplasmic side of the membrane.

Belongs to the DRAM/TMEM150 family. In terms of tissue distribution, highly expressed in the colon and lung with comparatively high levels also detectable in the lymph nodes, placenta, duodenum, peripheral blood mononuclear cells and spleen.

The protein localises to the cell membrane. It is found in the endosome membrane. Its subcellular location is the cytoplasmic vesicle. The protein resides in the autophagosome membrane. Modulator of macroautophagy that causes accumulation of autophagosomes under basal conditions and enhances autophagic flux. Represses cell death and promotes long-term clonogenic survival of cells grown in the absence of glucose in a macroautophagy-independent manner. May have some role in extracellular matrix engulfment or growth factor receptor recycling, both of which can modulate cell survival. In Homo sapiens (Human), this protein is Modulator of macroautophagy TMEM150B.